A 96-amino-acid polypeptide reads, in one-letter code: Co-chaperonin GroES (96 aa).

The protein belongs to the GroES chaperonin family. As to quaternary structure, heptamer of 7 subunits arranged in a ring. Interacts with the chaperonin GroEL.

Its subcellular location is the cytoplasm. In terms of biological role, together with the chaperonin GroEL, plays an essential role in assisting protein folding. The GroEL-GroES system forms a nano-cage that allows encapsulation of the non-native substrate proteins and provides a physical environment optimized to promote and accelerate protein folding. GroES binds to the apical surface of the GroEL ring, thereby capping the opening of the GroEL channel. The polypeptide is Co-chaperonin GroES (Actinobacillus succinogenes (strain ATCC 55618 / DSM 22257 / CCUG 43843 / 130Z)).